Consider the following 316-residue polypeptide: DNA-directed RNA polymerase subunit alpha (316 aa).

The alpha N-terminal domain (alpha-NTD) stretch occupies residues 1–229; the sequence is MLEMEKPRID…EYLKLFTEID (229 aa). Residues 246-316 are alpha C-terminal domain (alpha-CTD); that stretch reads KDKILEMSIE…LNLSFRKSED (71 aa).

It belongs to the RNA polymerase alpha chain family. Homodimer. The RNAP catalytic core consists of 2 alpha, 1 beta, 1 beta' and 1 omega subunit. When a sigma factor is associated with the core the holoenzyme is formed, which can initiate transcription.

It carries out the reaction RNA(n) + a ribonucleoside 5'-triphosphate = RNA(n+1) + diphosphate. Its function is as follows. DNA-dependent RNA polymerase catalyzes the transcription of DNA into RNA using the four ribonucleoside triphosphates as substrates. In Syntrophomonas wolfei subsp. wolfei (strain DSM 2245B / Goettingen), this protein is DNA-directed RNA polymerase subunit alpha.